We begin with the raw amino-acid sequence, 199 residues long: Probable thymidylate kinase (199 aa).

Position 9 to 16 (9 to 16 (GIDGCGKT)) interacts with ATP.

It belongs to the thymidylate kinase family.

The enzyme catalyses dTMP + ATP = dTDP + ADP. This chain is Probable thymidylate kinase, found in Methanococcus maripaludis (strain C7 / ATCC BAA-1331).